We begin with the raw amino-acid sequence, 252 residues long: Thiazole synthase (252 aa).

The active-site Schiff-base intermediate with DXP is lysine 91. 1-deoxy-D-xylulose 5-phosphate is bound by residues glycine 152, 179 to 180 (AG), and 201 to 202 (NT).

This sequence belongs to the ThiG family. In terms of assembly, homotetramer. Forms heterodimers with either ThiH or ThiS.

The protein localises to the cytoplasm. It catalyses the reaction [ThiS sulfur-carrier protein]-C-terminal-Gly-aminoethanethioate + 2-iminoacetate + 1-deoxy-D-xylulose 5-phosphate = [ThiS sulfur-carrier protein]-C-terminal Gly-Gly + 2-[(2R,5Z)-2-carboxy-4-methylthiazol-5(2H)-ylidene]ethyl phosphate + 2 H2O + H(+). It participates in cofactor biosynthesis; thiamine diphosphate biosynthesis. Its function is as follows. Catalyzes the rearrangement of 1-deoxy-D-xylulose 5-phosphate (DXP) to produce the thiazole phosphate moiety of thiamine. Sulfur is provided by the thiocarboxylate moiety of the carrier protein ThiS. In vitro, sulfur can be provided by H(2)S. The chain is Thiazole synthase from Gluconobacter oxydans (strain 621H) (Gluconobacter suboxydans).